The sequence spans 178 residues: dCTP deaminase, dUMP-forming (178 aa).

DCTP-binding positions include 96 to 101 (RSSLGR), Asp-113, 121 to 123 (TLE), Gln-142, Tyr-156, and Gln-163. Glu-123 (proton donor/acceptor) is an active-site residue.

This sequence belongs to the dCTP deaminase family. As to quaternary structure, homotrimer.

The enzyme catalyses dCTP + 2 H2O = dUMP + NH4(+) + diphosphate. It functions in the pathway pyrimidine metabolism; dUMP biosynthesis; dUMP from dCTP: step 1/1. Functionally, bifunctional enzyme that catalyzes both the deamination of dCTP to dUTP and the hydrolysis of dUTP to dUMP without releasing the toxic dUTP intermediate. The chain is dCTP deaminase, dUMP-forming from Acetivibrio thermocellus (strain ATCC 27405 / DSM 1237 / JCM 9322 / NBRC 103400 / NCIMB 10682 / NRRL B-4536 / VPI 7372) (Clostridium thermocellum).